We begin with the raw amino-acid sequence, 512 residues long: Peroxisomal N(1)-acetyl-spermine/spermidine oxidase (512 aa).

The residue at position 1 (methionine 1) is an N-acetylmethionine. Positions methionine 1–arginine 6 are excised as a propeptide. Residues alanine 25, glutamate 46, arginine 54, and histidine 70–tryptophan 71 each bind FAD. 2 residues coordinate substrate: histidine 73 and valine 195. Valine 248 contributes to the FAD binding site. Asparagine 321 provides a ligand contact to substrate. FAD-binding positions include glutamate 473 and threonine 482–threonine 483. The Microbody targeting signal signature appears at proline 510–leucine 512.

It belongs to the flavin monoamine oxidase family. As to quaternary structure, monomer. FAD is required as a cofactor.

It is found in the peroxisome. It localises to the cytoplasm. It catalyses the reaction N(1)-acetylspermine + O2 + H2O = 3-acetamidopropanal + spermidine + H2O2. The enzyme catalyses N(1)-acetylspermidine + O2 + H2O = 3-acetamidopropanal + putrescine + H2O2. The catalysed reaction is N(1),N(12)-diacetylspermine + O2 + H2O = 3-acetamidopropanal + N(1)-acetylspermidine + H2O2. It participates in amine and polyamine metabolism; spermine metabolism. Its function is as follows. Flavoenzyme which catalyzes the oxidation of N(1)-acetylspermine to spermidine and is thus involved in the polyamine back-conversion. Can also oxidize N(1)-acetylspermidine to putrescine. Substrate specificity: N(1)-acetylspermine = N(1)-acetylspermidine &gt; N(1),N(12)-diacylspermine &gt;&gt; spermine. Does not oxidize spermidine. Plays an important role in the regulation of polyamine intracellular concentration. The polypeptide is Peroxisomal N(1)-acetyl-spermine/spermidine oxidase (PAOX) (Bos taurus (Bovine)).